The sequence spans 380 residues: Probable acyl-CoA dehydrogenase YngJ (380 aa).

FAD-binding positions include 123–132 (FGLTEPNAGS), 156–158 (WIT), Arg-269, and 337–341 (QIHGG). Glu-364 (proton acceptor) is an active-site residue. Position 366–368 (366–368 (TSE)) interacts with FAD.

The protein belongs to the acyl-CoA dehydrogenase family. Requires FAD as cofactor.

It catalyses the reaction a 2,3-saturated acyl-CoA + A = a 2,3-dehydroacyl-CoA + AH2. This Bacillus subtilis (strain 168) protein is Probable acyl-CoA dehydrogenase YngJ (yngJ).